A 978-amino-acid polypeptide reads, in one-letter code: Monofunctional C1-tetrahydrofolate synthase, mitochondrial (978 aa).

Positions 1 to 10 (MGTRLPLVLR) are enriched in low complexity. The transit peptide at 1-31 (MGTRLPLVLRQLRRPPQPPGPPRRLRVPCRA) directs the protein to the mitochondrion. The disordered stretch occupies residues 1–71 (MGTRLPLVLR…SPGGRTPAAR (71 aa)). The interval 31–348 (ASSGGGGGGG…REQQHRRWRL (318 aa)) is methylenetetrahydrofolate dehydrogenase and cyclohydrolase. A compositionally biased stretch (gly residues) spans 33 to 45 (SGGGGGGGGGREG). Residue lysine 189 is modified to N6-acetyllysine; alternate. At lysine 189 the chain carries N6-succinyllysine; alternate. A formyltetrahydrofolate synthetase region spans residues 349-978 (HCLKLQPLSP…TETEQVKGLF (630 aa)). Serine 357 is subject to Phosphoserine. Residue 423–430 (TPLGEGKS) coordinates ATP. Lysine 596 carries the N6-succinyllysine modification.

In the N-terminal section; belongs to the tetrahydrofolate dehydrogenase/cyclohydrolase family. This sequence in the C-terminal section; belongs to the formate--tetrahydrofolate ligase family. In terms of assembly, homodimer. As to expression, detected in most tissues, highest expression found in placenta, thymus and brain. Low expression is found in liver and skeletal muscle. Up-regulated in colon adenocarcinoma.

Its subcellular location is the mitochondrion. It carries out the reaction (6S)-5,6,7,8-tetrahydrofolate + formate + ATP = (6R)-10-formyltetrahydrofolate + ADP + phosphate. Its pathway is one-carbon metabolism; tetrahydrofolate interconversion. In terms of biological role, may provide the missing metabolic reaction required to link the mitochondria and the cytoplasm in the mammalian model of one-carbon folate metabolism complementing thus the enzymatic activities of MTHFD2. This Homo sapiens (Human) protein is Monofunctional C1-tetrahydrofolate synthase, mitochondrial.